The chain runs to 344 residues: Polyhomeotic-like protein 2 (344 aa).

A compositionally biased stretch (polar residues) spans 1–23; that stretch reads MTSGNGSSPVPTAATGNRTQNGE. The disordered stretch occupies residues 1-28; the sequence is MTSGNGSSPVPTAATGNRTQNGENKPPQ. An HD1 motif is present at residues 25–53; that stretch reads KPPQAVVKPQILTHFIEGFVIQEGAQPFP. An FCS-type zinc finger spans residues 114 to 148; the sequence is GDGDPPKLKCELCGRVDFEYKFKRSKRFCSMACAK. Residues Cys123, Cys126, Cys142, and Cys146 each contribute to the Zn(2+) site. The segment at 165–269 is disordered; the sequence is RSKLQKPTVA…LHSRDPIAMS (105 aa). Basic residues predominate over residues 173–183; that stretch reads VAKHARRRSRK. Positions 216 to 233 are enriched in polar residues; that stretch reads KLSNSQEDSSRCSDNSSY. Residues 234 to 248 are compositionally biased toward low complexity; it reads EEPLSPMSASSSLSR. The SAM domain occupies 280-344; that stretch reads WNVEDVYDFV…YARISMLKDS (65 aa).

As to quaternary structure, component of a PRC1-like complex.

Its subcellular location is the nucleus. In terms of biological role, component of a Polycomb group (PcG) multiprotein PRC1-like complex, a complex class required to maintain the transcriptionally repressive state of many genes, including Hox genes, throughout development. PcG PRC1 complex acts via chromatin remodeling and modification of histones; it mediates monoubiquitination of histone H2A 'Lys-119', rendering chromatin heritably changed in its expressibility. The polypeptide is Polyhomeotic-like protein 2 (phc2) (Xenopus laevis (African clawed frog)).